Consider the following 134-residue polypeptide: NADH-quinone oxidoreductase subunit A (134 aa).

Transmembrane regions (helical) follow at residues 12–32 (FAIY…LAAL), 64–84 (FYLV…LFAW), and 93–113 (WVGF…LVYL).

The protein belongs to the complex I subunit 3 family. NDH-1 is composed of 13 different subunits. Subunits NuoA, H, J, K, L, M, N constitute the membrane sector of the complex.

It localises to the cell inner membrane. It catalyses the reaction a quinone + NADH + 5 H(+)(in) = a quinol + NAD(+) + 4 H(+)(out). NDH-1 shuttles electrons from NADH, via FMN and iron-sulfur (Fe-S) centers, to quinones in the respiratory chain. The immediate electron acceptor for the enzyme in this species is believed to be ubiquinone. Couples the redox reaction to proton translocation (for every two electrons transferred, four hydrogen ions are translocated across the cytoplasmic membrane), and thus conserves the redox energy in a proton gradient. This is NADH-quinone oxidoreductase subunit A from Shewanella oneidensis (strain ATCC 700550 / JCM 31522 / CIP 106686 / LMG 19005 / NCIMB 14063 / MR-1).